The chain runs to 382 residues: Mannitol-1-phosphate 5-dehydrogenase (382 aa).

3–14 (ALHFGAGNIGRG) is a binding site for NAD(+). At Lys269 the chain carries N6-acetyllysine.

The protein belongs to the mannitol dehydrogenase family. Monomer.

It catalyses the reaction D-mannitol 1-phosphate + NAD(+) = beta-D-fructose 6-phosphate + NADH + H(+). In Escherichia coli O157:H7, this protein is Mannitol-1-phosphate 5-dehydrogenase.